The chain runs to 197 residues: TLE family member 5 (197 aa).

The CCN domain stretch occupies residues 166 to 197 (LSALGSQAHLSKEDKNGHDGDTHQEDDGEKSD). The interval 174-197 (HLSKEDKNGHDGDTHQEDDGEKSD) is disordered. Residues 175–197 (LSKEDKNGHDGDTHQEDDGEKSD) show a composition bias toward basic and acidic residues. Ser196 carries the phosphoserine modification.

Belongs to the WD repeat Groucho/TLE family. As to quaternary structure, homooligomer and heterooligomer with other family members. Binds TCF7. Binds the NF-kappa-B subunit RELA. Interacts with PHF12. Interacts (via Q domain) with SIX3. Interacts with SIX6. Ubiquitinated by XIAP/BIRC4. In terms of tissue distribution, found predominantly in muscle, heart and Placenta. In fetal tissues, abundantly expressed in the heart, lung, kidney, brain and liver.

The protein resides in the nucleus. In terms of biological role, transcriptional corepressor. Acts as a dominant repressor towards other family members. Inhibits NF-kappa-B-regulated gene expression. May be required for the initiation and maintenance of the differentiated state. Essential for the transcriptional repressor activity of SIX3 during retina and lens development. This is TLE family member 5 from Homo sapiens (Human).